The following is a 156-amino-acid chain: Endogenous retrovirus group K member 7 Pro protein (156 aa).

Positions 21–96 constitute a Peptidase A2 domain; sequence FEGLVDTGAD…IPLNLWGRDL (76 aa). The active site involves aspartate 26. The G-patch domain occupies 111 to 156; the sequence is YSPTSQKIMTKMGYIPGKGLGKNEDGIKVPVEAKINQEREGIGYPF.

This sequence belongs to the peptidase A2 family. HERV class-II K(HML-2) subfamily. In terms of assembly, active as a homodimer. In terms of processing, autoproteolytically processed at the N-terminus. Expected C-terminal autoprocessing not detected. The sequence shown is that of the processed Pro protein.

It carries out the reaction Processing at the authentic HIV-1 PR recognition site and release of the mature p17 matrix and the p24 capsid protein, as a result of the cleavage of the -SQNY-|-PIVQ- cleavage site.. In terms of biological role, retroviral proteases have roles in processing of the primary translation products and the maturation of the viral particle. Endogenous Pro proteins may have kept, lost or modified their original function during evolution. This endogenous protein has retained most of the characteristics of retroviral proteases. The chain is Endogenous retrovirus group K member 7 Pro protein (ERVK-7) from Homo sapiens (Human).